A 910-amino-acid polypeptide reads, in one-letter code: Protein translocase subunit SecA (910 aa).

ATP is bound by residues Gln86, 104–108 (GEGKT), and Asp508. Residues Cys894, Cys896, Cys905, and Cys906 each coordinate Zn(2+).

This sequence belongs to the SecA family. Monomer and homodimer. Part of the essential Sec protein translocation apparatus which comprises SecA, SecYEG and auxiliary proteins SecDF. Other proteins may also be involved. The cofactor is Zn(2+).

The protein localises to the cell membrane. It localises to the cytoplasm. It carries out the reaction ATP + H2O + cellular proteinSide 1 = ADP + phosphate + cellular proteinSide 2.. Part of the Sec protein translocase complex. Interacts with the SecYEG preprotein conducting channel. Has a central role in coupling the hydrolysis of ATP to the transfer of proteins into and across the cell membrane, serving as an ATP-driven molecular motor driving the stepwise translocation of polypeptide chains across the membrane. The sequence is that of Protein translocase subunit SecA from Acetivibrio thermocellus (strain ATCC 27405 / DSM 1237 / JCM 9322 / NBRC 103400 / NCIMB 10682 / NRRL B-4536 / VPI 7372) (Clostridium thermocellum).